A 519-amino-acid chain; its full sequence is Cytosol aminopeptidase (519 aa).

Ser42 carries the phosphoserine modification. Position 45 is an N6-succinyllysine (Lys45). At Ser54 the chain carries Phosphoserine. Residues Lys61 and Lys103 each carry the N6-succinyllysine modification. Ser180 and Ser194 each carry phosphoserine. 3 residues coordinate Zn(2+): Leu202, Met203, and Thr205. N6-acetyllysine; alternate is present on Lys221. Position 221 is an N6-succinyllysine; alternate (Lys221). Position 238 is a phosphoserine (Ser238). Positions 282 and 287 each coordinate Zn(2+). Residues Lys282, Asp287, Ser292, and Lys294 each coordinate substrate. Mg(2+) is bound at residue Asp287. Lys294 is an active-site residue. Residues Arg303, Asp305, Asp364, and Glu366 each coordinate Zn(2+). Positions 305 and 364 each coordinate substrate. Mg(2+) is bound by residues Asp364 and Glu366. Arg368 is an active-site residue. Position 455 is an N6-acetyllysine; alternate (Lys455). Lys455 is subject to N6-succinyllysine; alternate. Position 476 is an N6-succinyllysine (Lys476). N6-acetyllysine; alternate is present on Lys489. The residue at position 489 (Lys489) is an N6-succinyllysine; alternate.

The protein belongs to the peptidase M17 family. In terms of assembly, homohexamer. Zn(2+) is required as a cofactor. The cofactor is Mn(2+).

It is found in the cytoplasm. The catalysed reaction is Release of an N-terminal amino acid, Xaa-|-Yaa-, in which Xaa is preferably Leu, but may be other amino acids including Pro although not Arg or Lys, and Yaa may be Pro. Amino acid amides and methyl esters are also readily hydrolyzed, but rates on arylamides are exceedingly low.. The enzyme catalyses an S-substituted L-cysteinylglycine + H2O = an S-substituted L-cysteine + glycine. It catalyses the reaction L-cysteinylglycine + H2O = L-cysteine + glycine. It carries out the reaction S-benzyl-L-cysteinylglycine + H2O = S-benzyl-L-cysteine + glycine. The catalysed reaction is Release of N-terminal proline from a peptide.. Functionally, cytosolic metallopeptidase that catalyzes the removal of unsubstituted N-terminal hydrophobic amino acids from various peptides. The presence of Zn(2+) ions is essential for the peptidase activity, and the association with other cofactors can modulate the substrate spectificity of the enzyme. For instance, in the presence of Mn(2+), it displays a specific Cys-Gly hydrolyzing activity of Cys-Gly-S-conjugates. Involved in the metabolism of glutathione and in the degradation of glutathione S-conjugates, which may play a role in the control of the cell redox status. The chain is Cytosol aminopeptidase from Sus scrofa (Pig).